Here is a 201-residue protein sequence, read N- to C-terminus: Small ribosomal subunit protein uS4c (201 aa).

The tract at residues 16–43 is disordered; that stretch reads GALPGLTSKKPRSASDLRNQSRSGKRSQ. The S4 RNA-binding domain occupies 89-169; that stretch reads MRLDNILFRL…LPKHLTLHSF (81 aa).

This sequence belongs to the universal ribosomal protein uS4 family. As to quaternary structure, part of the 30S ribosomal subunit. Contacts protein S5. The interaction surface between S4 and S5 is involved in control of translational fidelity.

It is found in the plastid. Its subcellular location is the chloroplast. In terms of biological role, one of the primary rRNA binding proteins, it binds directly to 16S rRNA where it nucleates assembly of the body of the 30S subunit. Functionally, with S5 and S12 plays an important role in translational accuracy. The sequence is that of Small ribosomal subunit protein uS4c (rps4) from Nymphaea alba (White water-lily).